Reading from the N-terminus, the 445-residue chain is Chromosomal replication initiator protein DnaA (445 aa).

Positions methionine 1–threonine 73 are domain I, interacts with DnaA modulators. The tract at residues threonine 73–glycine 102 is domain II. Positions asparagine 103 to alanine 323 are domain III, AAA+ region. Residues glycine 147, glycine 149, lysine 150, and threonine 151 each coordinate ATP. The segment at glutamine 324–lysine 445 is domain IV, binds dsDNA.

The protein belongs to the DnaA family. As to quaternary structure, oligomerizes as a right-handed, spiral filament on DNA at oriC.

It localises to the cytoplasm. Plays an essential role in the initiation and regulation of chromosomal replication. ATP-DnaA binds to the origin of replication (oriC) to initiate formation of the DNA replication initiation complex once per cell cycle. Binds the DnaA box (a 9 base pair repeat at the origin) and separates the double-stranded (ds)DNA. Forms a right-handed helical filament on oriC DNA; dsDNA binds to the exterior of the filament while single-stranded (ss)DNA is stabiized in the filament's interior. The ATP-DnaA-oriC complex binds and stabilizes one strand of the AT-rich DNA unwinding element (DUE), permitting loading of DNA polymerase. After initiation quickly degrades to an ADP-DnaA complex that is not apt for DNA replication. Binds acidic phospholipids. The sequence is that of Chromosomal replication initiator protein DnaA from Acholeplasma laidlawii.